Consider the following 154-residue polypeptide: Transcriptional repressor NrdR (154 aa).

The segment at 3–34 (CPFCRHPDSRVVDSREADEGQAIRRRRSCPEC) is a zinc-finger region. Residues 46–136 (LSVVKRSGVT…VYRSFSSAED (91 aa)) form the ATP-cone domain.

This sequence belongs to the NrdR family. Zn(2+) serves as cofactor.

Negatively regulates transcription of bacterial ribonucleotide reductase nrd genes and operons by binding to NrdR-boxes. The sequence is that of Transcriptional repressor NrdR from Rhodococcus jostii (strain RHA1).